We begin with the raw amino-acid sequence, 170 residues long: CDP-archaeol synthase (170 aa).

Transmembrane regions (helical) follow at residues 9 to 29 (AFWY…LGGG), 53 to 73 (GFFG…FLLP), 79 to 99 (LGIA…GDLI), 114 to 134 (PAVG…AYPV), and 140 to 160 (GEVL…NIFA).

The protein belongs to the CDP-archaeol synthase family. Mg(2+) is required as a cofactor.

The protein localises to the cell membrane. The catalysed reaction is 2,3-bis-O-(geranylgeranyl)-sn-glycerol 1-phosphate + CTP + H(+) = CDP-2,3-bis-O-(geranylgeranyl)-sn-glycerol + diphosphate. It functions in the pathway membrane lipid metabolism; glycerophospholipid metabolism. In terms of biological role, catalyzes the formation of CDP-2,3-bis-(O-geranylgeranyl)-sn-glycerol (CDP-archaeol) from 2,3-bis-(O-geranylgeranyl)-sn-glycerol 1-phosphate (DGGGP) and CTP. This reaction is the third ether-bond-formation step in the biosynthesis of archaeal membrane lipids. The chain is CDP-archaeol synthase from Pyrococcus horikoshii (strain ATCC 700860 / DSM 12428 / JCM 9974 / NBRC 100139 / OT-3).